The chain runs to 405 residues: Proline-rich P65 protein (405 aa).

The disordered stretch occupies residues 1–58; sequence MDINKPGWNQSDQQATAYDPNQQQYYGDGSTYYDPDQAVDPNQAYYPDPNTYPDAAAY. The segment covering 7–25 has biased composition (polar residues); the sequence is GWNQSDQQATAYDPNQQQY. A run of 12 repeats spans residues 40-45, 75-80, 83-87, 89-93, 95-99, 101-105, 107-111, 119-123, 140-145, 148-152, 154-158, and 168-172. Positions 40–172 are 12 X 5 AA repeats of D-P-N-Q-A-Y; sequence DPNQAYYPDP…YVTSTDPNAY (133 aa).

The N-terminus is blocked.

The protein localises to the cell membrane. The polypeptide is Proline-rich P65 protein (p65) (Mycoplasma pneumoniae (strain ATCC 29342 / M129 / Subtype 1) (Mycoplasmoides pneumoniae)).